We begin with the raw amino-acid sequence, 338 residues long: L-serine dehydratase (338 aa).

The residue at position 39 (lysine 39) is an N6-(pyridoxal phosphate)lysine.

It belongs to the serine/threonine dehydratase family. Pyridoxal 5'-phosphate serves as cofactor.

The protein localises to the cytoplasm. The catalysed reaction is L-serine = pyruvate + NH4(+). It functions in the pathway carbohydrate biosynthesis; gluconeogenesis. This is L-serine dehydratase (SDL1) from Saccharomyces cerevisiae (strain YJM789) (Baker's yeast).